The primary structure comprises 261 residues: MAAACRSVKGLVAVITGGASGLGLATAERLVGQGASAVLLDLPNSGGEAQAKKLGNNCVFAPADVTSEKDVQTALALAKGKFGRVDVAVNCAGIAVASKTYNLKKGQTHTLEDFQRVLDVNLMGTFNVIRLVAGEMGQNEPDQGGQRGVIINTASVAAFEGQVGQAAYSASKGGIVGMTLPIARDLAPIGIRVMTIAPGLFGTPLLTSLPEKVCNFLASQVPFPSRLGDPAEYAHLVQAIIENPFLNGEVIRLDGAIRMQP.

Alanine 2 bears the N-acetylalanine mark. Residues serine 20, leucine 22, and aspartate 41 each contribute to the NAD(+) site. N6-acetyllysine; alternate is present on lysine 53. An N6-succinyllysine; alternate modification is found at lysine 53. Positions 64 and 65 each coordinate NAD(+). Lysine 69 is subject to N6-acetyllysine. Cysteine 91 contributes to the NAD(+) binding site. Residues lysine 99 and lysine 105 each carry the N6-acetyllysine modification. Serine 155 is a substrate binding site. Tyrosine 168, lysine 172, phenylalanine 201, and threonine 203 together coordinate NAD(+). The active-site Proton acceptor is tyrosine 168. Lysine 212 carries the post-translational modification N6-acetyllysine; alternate. Lysine 212 is modified (N6-succinyllysine; alternate).

This sequence belongs to the short-chain dehydrogenases/reductases (SDR) family. As to quaternary structure, homotetramer. Component of mitochondrial ribonuclease P, a complex composed of TRMT10C/MRPP1, HSD17B10/MRPP2 and PRORP/MRPP3. Interacts with TRMT10C/MRPP1; forming the MRPP1-MRPP2 subcomplex of the mitochondrial ribonuclease P complex. As to expression, ubiquitously expressed in normal tissues but is overexpressed in neurons affected in AD.

Its subcellular location is the mitochondrion. It is found in the mitochondrion matrix. The protein resides in the mitochondrion nucleoid. The enzyme catalyses a (3S)-3-hydroxyacyl-CoA + NAD(+) = a 3-oxoacyl-CoA + NADH + H(+). The catalysed reaction is (2S,3S)-3-hydroxy-2-methylbutanoyl-CoA + NAD(+) = 2-methyl-3-oxobutanoyl-CoA + NADH + H(+). It catalyses the reaction testosterone + NAD(+) = androst-4-ene-3,17-dione + NADH + H(+). It carries out the reaction 5alpha-androstane-3alpha,17beta-diol + NAD(+) = 17beta-hydroxy-5alpha-androstan-3-one + NADH + H(+). The enzyme catalyses 17beta-estradiol + NAD(+) = estrone + NADH + H(+). The catalysed reaction is cholate + NAD(+) = 3alpha,12alpha-dihydroxy-7-oxo-5beta-cholanate + NADH + H(+). It catalyses the reaction (3S)-3-hydroxybutanoyl-CoA + NAD(+) = acetoacetyl-CoA + NADH + H(+). It carries out the reaction (3S)-hydroxyoctanoyl-CoA + NAD(+) = 3-oxooctanoyl-CoA + NADH + H(+). The enzyme catalyses (3S)-hydroxyhexadecanoyl-CoA + NAD(+) = 3-oxohexadecanoyl-CoA + NADH + H(+). The catalysed reaction is 17beta-hydroxy-5alpha-androstan-3-one + NAD(+) = 5alpha-androstan-3,17-dione + NADH + H(+). It catalyses the reaction 5alpha-pregnan-20beta-ol-3-one + NAD(+) = 5alpha-pregnane-3,20-dione + NADH + H(+). It carries out the reaction 3alpha-hydroxy-5alpha-pregnan-20-one + NAD(+) = 5alpha-pregnane-3,20-dione + NADH + H(+). The enzyme catalyses cortisone + NAD(+) = 17alpha-hydroxypregn-4-en-3,11,20-trione-21-al + NADH + H(+). The catalysed reaction is 11-dehydrocorticosterone + NAD(+) = pregn-4-ene-3,11,20,21-tetraone + NADH + H(+). It catalyses the reaction cortisol + NAD(+) = 11beta,17alpha-dihydroxypregn-4-ene-3,20,21-trione + NADH + H(+). It carries out the reaction chenodeoxycholate + NAD(+) = 7-oxolithocholate + NADH + H(+). The enzyme catalyses ursodeoxycholate + NAD(+) = 7-oxolithocholate + NADH + H(+). The catalysed reaction is 3beta,7beta-dihydroxy-5beta-cholan-24-oate + NAD(+) = 3beta-hydroxy-7-oxo-5beta-cholan-24-oate + NADH + H(+). The protein operates within amino-acid degradation; L-isoleucine degradation. Its pathway is lipid metabolism; fatty acid beta-oxidation. It participates in steroid metabolism. It functions in the pathway lipid metabolism; bile acid biosynthesis. With respect to regulation, the phospholipase C-like activity toward cardiolipin is inhibited by amyloid-beta peptide. Functionally, mitochondrial dehydrogenase involved in pathways of fatty acid, branched-chain amino acid and steroid metabolism. Acts as (S)-3-hydroxyacyl-CoA dehydrogenase in mitochondrial fatty acid beta-oxidation, a major degradation pathway of fatty acids. Catalyzes the third step in the beta-oxidation cycle, namely the reversible conversion of (S)-3-hydroxyacyl-CoA to 3-ketoacyl-CoA. Preferentially accepts straight medium- and short-chain acyl-CoA substrates with highest efficiency for (3S)-hydroxybutanoyl-CoA. Acts as 3-hydroxy-2-methylbutyryl-CoA dehydrogenase in branched-chain amino acid catabolic pathway. Catalyzes the oxidation of 3-hydroxy-2-methylbutanoyl-CoA into 2-methyl-3-oxobutanoyl-CoA, a step in isoleucine degradation pathway. Has hydroxysteroid dehydrogenase activity toward steroid hormones and bile acids. Catalyzes the oxidation of 3alpha-, 17beta-, 20beta- and 21-hydroxysteroids and 7alpha- and 7beta-hydroxy bile acids. Oxidizes allopregnanolone/brexanolone at the 3alpha-hydroxyl group, which is known to be critical for the activation of gamma-aminobutyric acid receptors (GABAARs) chloride channel. Has phospholipase C-like activity toward cardiolipin and its oxidized species. Likely oxidizes the 2'-hydroxyl in the head group of cardiolipin to form a ketone intermediate that undergoes nucleophilic attack by water and fragments into diacylglycerol, dihydroxyacetone and orthophosphate. Has higher affinity for cardiolipin with oxidized fatty acids and may degrade these species during the oxidative stress response to protect cells from apoptosis. By interacting with intracellular amyloid-beta, it may contribute to the neuronal dysfunction associated with Alzheimer disease (AD). Essential for structural and functional integrity of mitochondria. In terms of biological role, in addition to mitochondrial dehydrogenase activity, moonlights as a component of mitochondrial ribonuclease P, a complex that cleaves tRNA molecules in their 5'-ends. Together with TRMT10C/MRPP1, forms a subcomplex of the mitochondrial ribonuclease P, named MRPP1-MRPP2 subcomplex, which displays functions that are independent of the ribonuclease P activity. The MRPP1-MRPP2 subcomplex catalyzes the formation of N(1)-methylguanine and N(1)-methyladenine at position 9 (m1G9 and m1A9, respectively) in tRNAs; HSD17B10/MRPP2 acting as a non-catalytic subunit. The MRPP1-MRPP2 subcomplex also acts as a tRNA maturation platform: following 5'-end cleavage by the mitochondrial ribonuclease P complex, the MRPP1-MRPP2 subcomplex enhances the efficiency of 3'-processing catalyzed by ELAC2, retains the tRNA product after ELAC2 processing and presents the nascent tRNA to the mitochondrial CCA tRNA nucleotidyltransferase TRNT1 enzyme. Associates with mitochondrial DNA complexes at the nucleoids to initiate RNA processing and ribosome assembly. This Homo sapiens (Human) protein is 3-hydroxyacyl-CoA dehydrogenase type-2 (HSD17B10).